The sequence spans 436 residues: Histidinol dehydrogenase (436 aa).

Residues serine 242, glutamine 264, and histidine 267 each coordinate substrate. Positions 264 and 267 each coordinate Zn(2+). Residues glutamate 332 and histidine 333 each act as proton acceptor in the active site. Substrate contacts are provided by histidine 333, aspartate 366, glutamate 420, and histidine 425. Aspartate 366 is a Zn(2+) binding site. Histidine 425 is a Zn(2+) binding site.

The protein belongs to the histidinol dehydrogenase family. The cofactor is Zn(2+).

It carries out the reaction L-histidinol + 2 NAD(+) + H2O = L-histidine + 2 NADH + 3 H(+). The protein operates within amino-acid biosynthesis; L-histidine biosynthesis; L-histidine from 5-phospho-alpha-D-ribose 1-diphosphate: step 9/9. Catalyzes the sequential NAD-dependent oxidations of L-histidinol to L-histidinaldehyde and then to L-histidine. The sequence is that of Histidinol dehydrogenase from Nitratidesulfovibrio vulgaris (strain ATCC 29579 / DSM 644 / CCUG 34227 / NCIMB 8303 / VKM B-1760 / Hildenborough) (Desulfovibrio vulgaris).